The chain runs to 189 residues: Nucleoside diphosphate kinase 6 (189 aa).

ATP contacts are provided by lysine 19, phenylalanine 68, arginine 96, threonine 102, arginine 116, and asparagine 126. Histidine 129 serves as the catalytic Pros-phosphohistidine intermediate.

The protein belongs to the NDK family. It depends on Mg(2+) as a cofactor.

The catalysed reaction is a 2'-deoxyribonucleoside 5'-diphosphate + ATP = a 2'-deoxyribonucleoside 5'-triphosphate + ADP. The enzyme catalyses a ribonucleoside 5'-diphosphate + ATP = a ribonucleoside 5'-triphosphate + ADP. Major role in the synthesis of nucleoside triphosphates other than ATP. The ATP gamma phosphate is transferred to the NDP beta phosphate via a ping-pong mechanism, using a phosphorylated active-site intermediate. The sequence is that of Nucleoside diphosphate kinase 6 (Nme6) from Mus musculus (Mouse).